The following is a 138-amino-acid chain: Drosulfakinins (138 aa).

Residues 1-33 form the signal peptide; that stretch reads MGLRSCTHFATLVMPLWALAFCFLVLVPVPAQT. A propeptide spanning residues 34–73 is cleaved from the precursor; that stretch reads TSLQISKGDRRLQDLESNMGAESDQPNANLVGTSLSRFGD. A Phenylalanine amide modification is found at Phe-82. Positions 86-108 are excised as a propeptide; sequence VPRPIIPIELDLLMDNDDENTKA. Sulfotyrosine is present on Tyr-114. Residue Phe-119 is modified to Phenylalanine amide. Tyr-131 is modified (sulfotyrosine). Phe-136 carries the phenylalanine amide modification.

The protein belongs to the gastrin/cholecystokinin family.

Its subcellular location is the secreted. Its function is as follows. Drosulfakinin-0 (DSK 0) plays diverse biological roles including regulating gut muscle contraction in adults but not in larvae. This is Drosulfakinins from Drosophila teissieri (Fruit fly).